The primary structure comprises 346 residues: Elongation factor Ts (346 aa).

An involved in Mg(2+) ion dislocation from EF-Tu region spans residues 80–83 (TDFV).

It belongs to the EF-Ts family.

The protein resides in the cytoplasm. Functionally, associates with the EF-Tu.GDP complex and induces the exchange of GDP to GTP. It remains bound to the aminoacyl-tRNA.EF-Tu.GTP complex up to the GTP hydrolysis stage on the ribosome. This Streptococcus agalactiae serotype Ia (strain ATCC 27591 / A909 / CDC SS700) protein is Elongation factor Ts.